Reading from the N-terminus, the 336-residue chain is Inositol 2-dehydrogenase (336 aa).

Belongs to the Gfo/Idh/MocA family. In terms of assembly, homotetramer.

The catalysed reaction is myo-inositol + NAD(+) = scyllo-inosose + NADH + H(+). Its function is as follows. Involved in the oxidation of myo-inositol (MI) to 2-keto-myo-inositol (2KMI or 2-inosose). In Acidiphilium cryptum (strain JF-5), this protein is Inositol 2-dehydrogenase.